The following is a 435-amino-acid chain: Adenylosuccinate synthetase (435 aa).

Residues 11–17 and 39–41 contribute to the GTP site; these read GDEGKGK and GHT. The active-site Proton acceptor is Asp-12. Mg(2+) contacts are provided by Asp-12 and Gly-39. Residues 12 to 15, 37 to 40, Thr-128, Arg-142, Gln-223, Thr-238, and Arg-302 each bind IMP; these read DEGK and NAGH. The active-site Proton donor is His-40. 298-304 provides a ligand contact to substrate; it reads SVTGRPR. GTP is bound by residues Arg-304, 330 to 332, and 412 to 414; these read KLD and STG.

Belongs to the adenylosuccinate synthetase family. In terms of assembly, homodimer. It depends on Mg(2+) as a cofactor.

The protein resides in the cytoplasm. The catalysed reaction is IMP + L-aspartate + GTP = N(6)-(1,2-dicarboxyethyl)-AMP + GDP + phosphate + 2 H(+). It participates in purine metabolism; AMP biosynthesis via de novo pathway; AMP from IMP: step 1/2. Functionally, plays an important role in the de novo pathway of purine nucleotide biosynthesis. Catalyzes the first committed step in the biosynthesis of AMP from IMP. This Coxiella burnetii (strain Dugway 5J108-111) protein is Adenylosuccinate synthetase.